The chain runs to 28 residues: Endoglucanase (28 aa).

Catalysis depends on Glu20, which acts as the Nucleophile.

This sequence belongs to the glycosyl hydrolase 5 (cellulase A) family.

It is found in the cell membrane. It catalyses the reaction Endohydrolysis of (1-&gt;4)-beta-D-glucosidic linkages in cellulose, lichenin and cereal beta-D-glucans.. This is Endoglucanase from Schizophyllum commune (Split gill fungus).